Consider the following 342-residue polypeptide: Methylthioribose-1-phosphate isomerase (342 aa).

Residues 49-51, Arg-86, and Gln-187 contribute to the substrate site; that span reads RGA. Asp-228 serves as the catalytic Proton donor. 238-239 contacts substrate; that stretch reads NK.

The protein belongs to the eIF-2B alpha/beta/delta subunits family. MtnA subfamily.

The catalysed reaction is 5-(methylsulfanyl)-alpha-D-ribose 1-phosphate = 5-(methylsulfanyl)-D-ribulose 1-phosphate. Its pathway is amino-acid biosynthesis; L-methionine biosynthesis via salvage pathway; L-methionine from S-methyl-5-thio-alpha-D-ribose 1-phosphate: step 1/6. Its function is as follows. Catalyzes the interconversion of methylthioribose-1-phosphate (MTR-1-P) into methylthioribulose-1-phosphate (MTRu-1-P). The protein is Methylthioribose-1-phosphate isomerase of Enterobacter sp. (strain 638).